Reading from the N-terminus, the 341-residue chain is tRNA N6-adenosine threonylcarbamoyltransferase (341 aa).

Positions 115 and 119 each coordinate Fe cation. Substrate-binding positions include leucine 138–glycine 142, aspartate 171, glycine 184, and asparagine 276. Aspartate 304 is a binding site for Fe cation.

Belongs to the KAE1 / TsaD family. Requires Fe(2+) as cofactor.

The protein localises to the cytoplasm. It carries out the reaction L-threonylcarbamoyladenylate + adenosine(37) in tRNA = N(6)-L-threonylcarbamoyladenosine(37) in tRNA + AMP + H(+). In terms of biological role, required for the formation of a threonylcarbamoyl group on adenosine at position 37 (t(6)A37) in tRNAs that read codons beginning with adenine. Is involved in the transfer of the threonylcarbamoyl moiety of threonylcarbamoyl-AMP (TC-AMP) to the N6 group of A37, together with TsaE and TsaB. TsaD likely plays a direct catalytic role in this reaction. This Stenotrophomonas maltophilia (strain R551-3) protein is tRNA N6-adenosine threonylcarbamoyltransferase.